The primary structure comprises 553 residues: Membrane protein insertase YidC (553 aa).

Transmembrane regions (helical) follow at residues 7–24 (VLWV…DNWQ), 365–385 (WGWA…PLSA), 435–455 (LPVV…LASV), 474–494 (PFFI…SLNP), and 509–529 (PIAF…YYVV).

Belongs to the OXA1/ALB3/YidC family. Type 1 subfamily. In terms of assembly, interacts with the Sec translocase complex via SecD. Specifically interacts with transmembrane segments of nascent integral membrane proteins during membrane integration.

Its subcellular location is the cell inner membrane. Its function is as follows. Required for the insertion and/or proper folding and/or complex formation of integral membrane proteins into the membrane. Involved in integration of membrane proteins that insert both dependently and independently of the Sec translocase complex, as well as at least some lipoproteins. Aids folding of multispanning membrane proteins. The sequence is that of Membrane protein insertase YidC from Burkholderia orbicola (strain MC0-3).